Consider the following 304-residue polypeptide: Glycine--tRNA ligase alpha subunit (304 aa).

This sequence belongs to the class-II aminoacyl-tRNA synthetase family. Tetramer of two alpha and two beta subunits.

The protein localises to the cytoplasm. It carries out the reaction tRNA(Gly) + glycine + ATP = glycyl-tRNA(Gly) + AMP + diphosphate. The protein is Glycine--tRNA ligase alpha subunit of Photorhabdus laumondii subsp. laumondii (strain DSM 15139 / CIP 105565 / TT01) (Photorhabdus luminescens subsp. laumondii).